A 24-amino-acid polypeptide reads, in one-letter code: Osteocalcin (24 aa).

In terms of domain architecture, Gla spans arginine 1–arginine 24. Ca(2+) is bound by residues glutamate 2, glutamate 5, and aspartate 11. Residues glutamate 2 and glutamate 5 each carry the 4-carboxyglutamate modification. A disulfide bond links cysteine 4 and cysteine 10.

The protein belongs to the osteocalcin/matrix Gla protein family. Gamma-carboxyglutamate residues are formed by vitamin K dependent carboxylation by GGCX. These residues are essential for the binding of calcium. Decarboxylation promotes the hormone activity.

Its subcellular location is the secreted. Functionally, the carboxylated form is one of the main organic components of the bone matrix, which constitutes 1-2% of the total bone protein: it acts as a negative regulator of bone formation and is required to limit bone formation without impairing bone resorption or mineralization. The carboxylated form binds strongly to apatite and calcium. The uncarboxylated form acts as a hormone secreted by osteoblasts, which regulates different cellular processes, such as energy metabolism, male fertility and brain development. Regulates of energy metabolism by acting as a hormone favoring pancreatic beta-cell proliferation, insulin secretion and sensitivity and energy expenditure. Uncarboxylated osteocalcin hormone also promotes testosterone production in the testes: acts as a ligand for G protein-coupled receptor GPRC6A at the surface of Leydig cells, initiating a signaling response that promotes the expression of enzymes required for testosterone synthesis in a CREB-dependent manner. Also acts as a regulator of brain development: osteocalcin hormone crosses the blood-brain barrier and acts as a ligand for GPR158 on neurons, initiating a signaling response that prevents neuronal apoptosis in the hippocampus, favors the synthesis of all monoamine neurotransmitters and inhibits that of gamma-aminobutyric acid (GABA). Osteocalcin also crosses the placenta during pregnancy and maternal osteocalcin is required for fetal brain development. This is Osteocalcin from Homo sapiens neanderthalensis (Neanderthal).